The sequence spans 179 residues: Lipoprotein signal peptidase (179 aa).

The next 4 helical transmembrane spans lie at 10–30, 48–68, 75–95, and 101–121; these read LFQFYPHNLIWLGLSILAIII, VPVLPFLNWTLLHNYGAAFSF, WQHYLFTGLAGIVSIIFIFWL, and NAMILPAAIALILGGALGNLI. Catalysis depends on residues Asp-131 and Asp-149. The helical transmembrane segment at 141-161 threads the bilayer; the sequence is HFPAFNIADSAITIGTILLLI.

This sequence belongs to the peptidase A8 family.

It is found in the cell inner membrane. It catalyses the reaction Release of signal peptides from bacterial membrane prolipoproteins. Hydrolyzes -Xaa-Yaa-Zaa-|-(S,diacylglyceryl)Cys-, in which Xaa is hydrophobic (preferably Leu), and Yaa (Ala or Ser) and Zaa (Gly or Ala) have small, neutral side chains.. The protein operates within protein modification; lipoprotein biosynthesis (signal peptide cleavage). Functionally, this protein specifically catalyzes the removal of signal peptides from prolipoproteins. The sequence is that of Lipoprotein signal peptidase from Acinetobacter baylyi (strain ATCC 33305 / BD413 / ADP1).